A 69-amino-acid chain; its full sequence is Small ribosomal subunit protein bS21 (69 aa).

The protein belongs to the bacterial ribosomal protein bS21 family.

In Borrelia duttonii (strain Ly), this protein is Small ribosomal subunit protein bS21.